The following is a 233-amino-acid chain: Ribose-5-phosphate isomerase A (233 aa).

Substrate-binding positions include 31-34 (SGST), 87-90 (DGAD), and 100-103 (KGGG). Glu109 (proton acceptor) is an active-site residue. Position 127 (Lys127) interacts with substrate.

The protein belongs to the ribose 5-phosphate isomerase family. Homodimer.

It catalyses the reaction aldehydo-D-ribose 5-phosphate = D-ribulose 5-phosphate. The protein operates within carbohydrate degradation; pentose phosphate pathway; D-ribose 5-phosphate from D-ribulose 5-phosphate (non-oxidative stage): step 1/1. Its function is as follows. Catalyzes the reversible conversion of ribose-5-phosphate to ribulose 5-phosphate. In Chlamydia felis (strain Fe/C-56) (Chlamydophila felis), this protein is Ribose-5-phosphate isomerase A.